Reading from the N-terminus, the 646-residue chain is 1-deoxy-D-xylulose-5-phosphate synthase (646 aa).

Residues histidine 86 and 127 to 129 contribute to the thiamine diphosphate site; that span reads AHS. A Mg(2+)-binding site is contributed by aspartate 158. Residues 159–160, asparagine 188, tyrosine 295, and glutamate 377 each bind thiamine diphosphate; that span reads GA. Residue asparagine 188 coordinates Mg(2+).

This sequence belongs to the transketolase family. DXPS subfamily. As to quaternary structure, homodimer. Requires Mg(2+) as cofactor. Thiamine diphosphate serves as cofactor.

It carries out the reaction D-glyceraldehyde 3-phosphate + pyruvate + H(+) = 1-deoxy-D-xylulose 5-phosphate + CO2. It functions in the pathway metabolic intermediate biosynthesis; 1-deoxy-D-xylulose 5-phosphate biosynthesis; 1-deoxy-D-xylulose 5-phosphate from D-glyceraldehyde 3-phosphate and pyruvate: step 1/1. Functionally, catalyzes the acyloin condensation reaction between C atoms 2 and 3 of pyruvate and glyceraldehyde 3-phosphate to yield 1-deoxy-D-xylulose-5-phosphate (DXP). The protein is 1-deoxy-D-xylulose-5-phosphate synthase of Burkholderia cenocepacia (strain HI2424).